A 139-amino-acid chain; its full sequence is Early placenta insulin-like peptide (139 aa).

The first 25 residues, 1-25 (MASLFRSYLPAIWLLLSQLLRESLA), serve as a signal peptide directing secretion. 3 disulfides stabilise this stretch: Cys31-Cys125, Cys43-Cys138, and Cys124-Cys129. A propeptide spans 59-114 (LESGRPKEMVSTSNNKDGQALGTTSEFIPNLSPELKKPLSEGQPSLKKIILSRKKR) (c peptide).

Belongs to the insulin family. Expressed in placenta, uterus and in fetal perichondrium. Expression levels were increased in both early placentas and molar pregnancies and were reduced in choriocarcinoma cells.

It is found in the secreted. In terms of biological role, may play an important role in trophoblast development and in the regulation of bone formation. The chain is Early placenta insulin-like peptide (INSL4) from Homo sapiens (Human).